The primary structure comprises 268 residues: Secreted RxLR effector protein 6 (268 aa).

A signal peptide spans 1-19; the sequence is MRGAFYIAIALLVVRSRTA. Residues 48-63 carry the RxLR-dEER motif; that stretch reads RYLRDGLAHSAANEER. Residues 90–123 are disordered; the sequence is IGGHSHTPKSKRKVNLSPAKSQSGIRKKSTSINK. Polar residues predominate over residues 107 to 123; the sequence is PAKSQSGIRKKSTSINK.

The protein belongs to the RxLR effector family.

The protein localises to the secreted. It localises to the host nucleus. It is found in the host cytoplasm. Functionally, secreted effector that completely suppresses the host cell death induced by cell death-inducing proteins. The chain is Secreted RxLR effector protein 6 from Plasmopara viticola (Downy mildew of grapevine).